Consider the following 480-residue polypeptide: Pre-glycoprotein polyprotein GP complex (480 aa).

The N-myristoyl glycine; by host moiety is linked to residue glycine 2. At 2–17 (GQLVSFFQEIPVFFQE) the chain is on the extracellular side. A helical transmembrane segment spans residues 18 to 33 (ALNIALAVVTLLAIVK). Residues 34–58 (GVLNLWKSGLFQLLMFLILAGRSCS) lie on the Cytoplasmic side of the membrane. Residue cysteine 57 coordinates Zn(2+). At 59–419 (FRIGYHTSFE…QGRTPLTLVD (361 aa)) the chain is on the extracellular side. 4 disulfides stabilise this stretch: cysteine 85-cysteine 221, cysteine 266-cysteine 279, cysteine 288-cysteine 297, and cysteine 351-cysteine 372. Asparagine 88, asparagine 174, and asparagine 214 each carry an N-linked (GlcNAc...) asparagine; by host glycan. N-linked (GlcNAc...) asparagine; by host glycans are attached at residues asparagine 352, asparagine 360, asparagine 377, and asparagine 382. Residues 420–440 (LCFWSAVFYTTTLFLHLVGFP) form a helical membrane-spanning segment. Over 441-480 (THRHISGEPCPLPHRLNRHGACNCGRFKRLKKPLVWYKHH) the chain is Cytoplasmic. Zn(2+) is bound by residues histidine 442, histidine 444, cysteine 450, histidine 454, cysteine 462, cysteine 464, and histidine 480.

The protein belongs to the arenaviridae GPC protein family. In terms of assembly, interacts with glycoprotein G2. Part of the GP complex (GP-C) together with glycoprotein G1 and glycoprotein G2. The GP-complex interacts with protein Z, which interacts with ribonucleocapsid; these interactions may induce virion budding. As to quaternary structure, homotrimer; disulfide-linked. In pre-fusion state, G1 homotrimers bind G2 homotrimers via ionic interactions. Part of the GP complex (GP-C) together with glycoprotein G2 and the stable signal peptide. The GP-complex interacts with protein Z, which interacts with ribonucleocapsid; these interactions may induce virion budding. Homotrimer. Interacts with the stable signal peptide. In pre-fusion state, G2 homotrimers bind G1 homotrimers via ionic interactions. Part of the GP complex (GP-C) together with glycoprotein G1 and the stable signal peptide. Acidification in the endosome triggers rearrangements, which ultimately leads to a 6 helix bundle formed by the two heptad repeat domains (HR1 and HR2) in post-fusion state. The GP-complex interacts with protein Z, which interacts with ribonucleocapsid; these interactions may induce virion budding. Post-translationally, specific enzymatic cleavages in vivo yield mature proteins. GP-C polyprotein is cleaved in the endoplasmic reticulum by the host protease MBTPS1. Only cleaved glycoprotein is incorporated into virions. In terms of processing, the SSP remains stably associated with the GP complex following cleavage by signal peptidase and plays crucial roles in the trafficking of GP through the secretory pathway. Myristoylation is necessary for GP2-mediated fusion activity.

It is found in the virion membrane. Its subcellular location is the host endoplasmic reticulum membrane. It localises to the host Golgi apparatus membrane. The protein resides in the host cell membrane. Functions as a cleaved signal peptide that is retained as the third component of the GP complex (GP-C). Helps to stabilize the spike complex in its native conformation. The SSP is required for efficient glycoprotein expression, post-translational maturation cleavage of G1 and G2, glycoprotein transport to the cell surface plasma membrane, formation of infectious virus particles, and acid pH-dependent glycoprotein-mediated cell fusion. In terms of biological role, forms the virion spikes together with glycoprotein G2. The glycoprotein spike trimers are connected to the underlying matrix. Interacts with the host receptor leading to virus endocytosis. Functionally, forms the virion spikes together with glycoprotein G1. The glycoprotein spike trimers are connected to the underlying matrix. Class I viral fusion protein that directs fusion of viral and host endosomal membranes, leading to delivery of the nucleocapsid into the cytoplasm. Membrane fusion is mediated by irreversible conformational changes induced by acidification. In Cupixi mammarenavirus (isolate Rat/Brasil/BeAn 119303/1970) (CPXV), this protein is Pre-glycoprotein polyprotein GP complex.